We begin with the raw amino-acid sequence, 318 residues long: 2-keto-3-deoxygluconate permease (318 aa).

The next 10 membrane-spanning stretches (helical) occupy residues 10–30, 42–62, 76–96, 105–125, 139–159, 163–183, 199–219, 224–244, 263–283, and 289–309; these read IPGG…TFTP, GLIT…GASI, VLVV…GTFL, MLAG…NGGL, AGAF…VILG, IATF…IGFA, VQTL…LSVI, FAGI…LILA, AGAA…FAPV, and ALVA…TALW.

This sequence belongs to the KdgT transporter family.

Its subcellular location is the cell inner membrane. It catalyses the reaction 2-dehydro-3-deoxy-D-gluconate(in) + H(+)(in) = 2-dehydro-3-deoxy-D-gluconate(out) + H(+)(out). Functionally, catalyzes the proton-dependent uptake of 2-keto-3-deoxygluconate (KDG) into the cell. The chain is 2-keto-3-deoxygluconate permease from Pectobacterium carotovorum subsp. carotovorum (Erwinia carotovora subsp. carotovora).